We begin with the raw amino-acid sequence, 275 residues long: Nitrogenase iron protein 2 (275 aa).

ATP is bound at residue 9–16; the sequence is GKGGIGKS. C97 contributes to the [4Fe-4S] cluster binding site. Position 100 is an ADP-ribosylarginine; by dinitrogenase reductase ADP-ribosyltransferase (R100). C132 serves as a coordination point for [4Fe-4S] cluster.

This sequence belongs to the NifH/BchL/ChlL family. In terms of assembly, homodimer. The cofactor is [4Fe-4S] cluster. The reversible ADP-ribosylation of Arg-100 inactivates the nitrogenase reductase and regulates nitrogenase activity.

The catalysed reaction is N2 + 8 reduced [2Fe-2S]-[ferredoxin] + 16 ATP + 16 H2O = H2 + 8 oxidized [2Fe-2S]-[ferredoxin] + 2 NH4(+) + 16 ADP + 16 phosphate + 6 H(+). In terms of biological role, the key enzymatic reactions in nitrogen fixation are catalyzed by the nitrogenase complex, which has 2 components: the iron protein (component 2) and a component 1 which is either a molybdenum-iron protein, a vanadium-iron, or an iron-iron protein. This is Nitrogenase iron protein 2 (anfH) from Rhodobacter capsulatus (Rhodopseudomonas capsulata).